The sequence spans 361 residues: Carbon monoxide-induced hydrogenase (361 aa).

The Ni(2+) site is built by Cys-64, Cys-67, Cys-355, and Cys-358.

The protein to E.coli formate hydrogenlyase hydrogenase isozyme 3 and to bovine mitochondrial NADH-ubiquinone oxidoreductase. Requires Ni(2+) as cofactor.

In terms of biological role, the carbon monoxide dehydrogenase (CODH) oxidizes carbon monoxide coupled, via CooF, to the reduction of a hydrogen cation by a hydrogenase (probably CooH). This is Carbon monoxide-induced hydrogenase (cooH) from Rhodospirillum rubrum.